The primary structure comprises 365 residues: MSSTRAKIAVDAMGGDYAPDEIVAGAIRAVEELNVEVFLVGDPVRIQKYLDEHSSPANQFLHVVEAEGVVEMCEEPLVAIRRKPKASINLSMQLVRKKQADAVVSAGHSGAAMAAALLKLGRIKGIDRPAIGAVFPTLDPERSVIVLDVGANVDSRPKYLEQFALMGTIYSKYVLGNKEPQVGLLNIGEEPSKGNELALKTHELLSSNPAIPFKGNAEGRDVLSGEFDVVVCDGFTGNILLKFAESVGAVLLQILKEELPRGLRGKLGAAVLTPNLKRIKQRIDHAEHGGALLFGVAGVCIISHGSSKAPSIFNAIRLAKEAIDNQVIQRIQNYTEEHQALLEQQTNSTTTLSEVASSAMIEKSE.

This sequence belongs to the PlsX family. As to quaternary structure, homodimer. Probably interacts with PlsY.

The protein resides in the cytoplasm. It catalyses the reaction a fatty acyl-[ACP] + phosphate = an acyl phosphate + holo-[ACP]. It participates in lipid metabolism; phospholipid metabolism. In terms of biological role, catalyzes the reversible formation of acyl-phosphate (acyl-PO(4)) from acyl-[acyl-carrier-protein] (acyl-ACP). This enzyme utilizes acyl-ACP as fatty acyl donor, but not acyl-CoA. This chain is Phosphate acyltransferase, found in Picosynechococcus sp. (strain ATCC 27264 / PCC 7002 / PR-6) (Agmenellum quadruplicatum).